Reading from the N-terminus, the 66-residue chain is Large ribosomal subunit protein uL30 (66 aa).

Belongs to the universal ribosomal protein uL30 family. In terms of assembly, part of the 50S ribosomal subunit.

This is Large ribosomal subunit protein uL30 from Chloroherpeton thalassium (strain ATCC 35110 / GB-78).